The chain runs to 194 residues: ATP-dependent Clp protease proteolytic subunit (194 aa).

Serine 98 serves as the catalytic Nucleophile. Histidine 123 is a catalytic residue.

The protein belongs to the peptidase S14 family. In terms of assembly, fourteen ClpP subunits assemble into 2 heptameric rings which stack back to back to give a disk-like structure with a central cavity, resembling the structure of eukaryotic proteasomes.

Its subcellular location is the cytoplasm. The catalysed reaction is Hydrolysis of proteins to small peptides in the presence of ATP and magnesium. alpha-casein is the usual test substrate. In the absence of ATP, only oligopeptides shorter than five residues are hydrolyzed (such as succinyl-Leu-Tyr-|-NHMec, and Leu-Tyr-Leu-|-Tyr-Trp, in which cleavage of the -Tyr-|-Leu- and -Tyr-|-Trp bonds also occurs).. Functionally, cleaves peptides in various proteins in a process that requires ATP hydrolysis. Has a chymotrypsin-like activity. Plays a major role in the degradation of misfolded proteins. In Clostridium botulinum (strain Loch Maree / Type A3), this protein is ATP-dependent Clp protease proteolytic subunit.